We begin with the raw amino-acid sequence, 96 residues long: NADH-ubiquinone oxidoreductase chain 4L (96 aa).

Transmembrane regions (helical) follow at residues 2 to 22 (IMIL…FCFV), 28 to 48 (LLSM…MLFI), and 62 to 82 (MFLT…VSMI).

This sequence belongs to the complex I subunit 4L family.

It is found in the mitochondrion membrane. It carries out the reaction a ubiquinone + NADH + 5 H(+)(in) = a ubiquinol + NAD(+) + 4 H(+)(out). In terms of biological role, core subunit of the mitochondrial membrane respiratory chain NADH dehydrogenase (Complex I) that is believed to belong to the minimal assembly required for catalysis. Complex I functions in the transfer of electrons from NADH to the respiratory chain. The immediate electron acceptor for the enzyme is believed to be ubiquinone. In Drosophila melanogaster (Fruit fly), this protein is NADH-ubiquinone oxidoreductase chain 4L (mt:ND4L).